Here is a 776-residue protein sequence, read N- to C-terminus: K(+) efflux antiporter 3, chloroplastic (776 aa).

Residues 1-72 (MAISTMLGSI…KVFLDTSKRF (72 aa)) constitute a chloroplast transit peptide. Topologically, residues 73 to 93 (YFQGRWSESSGRRVETYAGVD) are lumenal, thylakoid. Residues 94-114 (VASAVDVINDLGFDTLTFLMV) traverse the membrane as a helical segment. Thr115 is a topological domain (stromal). Residues 116 to 136 (VIIVPAFRILKASPILGFFFA) traverse the membrane as a helical segment. At 137 to 153 (GVVLNQFGLIRNLTDVK) the chain is on the lumenal, thylakoid side. The helical transmembrane segment at 154 to 174 (VLSEWGILFLLFEMGLELSLA) threads the bilayer. Topologically, residues 175 to 181 (RLKALAK) are stromal. The chain crosses the membrane as a helical span at residues 182–202 (FAFGMGLTQVLLCTAAFTAFE). Topologically, residues 203 to 232 (LPPNGAIGTKILEFLFHSRPDLVNIRSIDE) are lumenal, thylakoid. Residues 233–253 (AVVIGAALSLSSSAFVLQLLA) form a helical membrane-spanning segment. The Stromal segment spans residues 254 to 266 (EKGELPTRFGSAT). A helical membrane pass occupies residues 267–287 (LGILLLQDIAVVPLLVILPVL). Topologically, residues 288–296 (ESQDIGGES) are lumenal, thylakoid. The chain crosses the membrane as a helical span at residues 297-317 (IWPMLAKESAKALGGLGILSL). Residues 318-338 (GGKFFLRRIFEVVAETRSSEA) are Stromal-facing. A helical membrane pass occupies residues 339–359 (FVALCLLTVAGTSLVTQWLGF). The Lumenal, thylakoid portion of the chain corresponds to 360-389 (SDTLGAFLAGALLAETNFRTQIEADIRPFR). A helical membrane pass occupies residues 390–410 (GLLLGLFFVTTGTSIDMEVLF). Topologically, residues 411–415 (REWPN) are stromal. Residues 416–436 (VLSLLGGLIVIKTLIITAIGP) form a helical membrane-spanning segment. Over 437 to 445 (RVGLTIQES) the chain is Lumenal, thylakoid. The helical transmembrane segment at 446-466 (VRVGFLLSQGGEFAFVVFSLA) threads the bilayer. Residues 467–468 (NR) lie on the Stromal side of the membrane. Residues 469–489 (LGVLPNELNKLLIIVVVLSMA) traverse the membrane as a helical segment. The Lumenal, thylakoid portion of the chain corresponds to 490 to 526 (LTPYLNQLGRKAADFLDERLDPGEKIGEDVNFDVSES). The RCK N-terminal domain maps to 524–649 (SESIVIIGFG…KKAGATDAIL (126 aa)). Residues 527 to 547 (IVIIGFGQMGQVLANFLSTPL) traverse the membrane as a helical segment. Topologically, residues 548–776 (VSDSDLVGWP…FVGKADKAQD (229 aa)) are stromal. The segment at 728 to 776 (MQMKASDSNSDSAAEILQETAGLSQPPEIDDSSVNIDNGFVGKADKAQD) is disordered.

The protein belongs to the monovalent cation:proton antiporter 2 (CPA2) transporter (TC 2.A.37) family. KEA (TC 2.A.37.1) subfamily. Expressed at low levels in flowers, siliques and leaves. As to expression, expressed at low levels in flowers and leaves. In terms of tissue distribution, most abundant splice form in all organs, including siliques, flowers, leaves and roots. Preferentially expressed in photosynthetically active tissues, including seedling cotyledons and mature leaves. Expressed in shoots and roots.

It localises to the plastid. The protein resides in the chloroplast membrane. It is found in the golgi apparatus membrane. The protein localises to the chloroplast thylakoid membrane. It carries out the reaction K(+)(in) + H(+)(out) = K(+)(out) + H(+)(in). Regulated by a mechanism involving lumenal C-terminus region; a fine-tuned balance between photoprotective energy dissipation in high light and a maximum quantum yield in low light involves a reduced activity under high light. Its function is as follows. Electroneutral K(+)/H(+) efflux antiporter assuring proton efflux from the thylakoid lumen to the plastid stroma, thus increasing the membrane potential at the expense of the proton gradient (delta pH) component of the proton motive force (PMF). Promotes photosynthesis and growth in conditions where the chloroplast (cp)ATP synthase activity is low (e.g. cgl160 mutant background) by reducing the pH gradient across the thylakoid membrane. Accelerates photosynthetic acclimation in fluctuating light environments by modulating two components of the proton motive force, the proton gradient and the electric potential (delta Psi). Promotes the relaxation of photoprotective energy-dependent non-photochemical quenching (NPQ) after transitions from high to low light, thus enhancing photosystem II (PSII) quantum efficiency in fluctuating light. On transition from high to low light, slows down photoprotection by dissipating the pH gradient across the thylakoid membrane. During photosynthetic response on transition from dark to low light, involved in a sequential mechanism of adaptation; VCCN1 and CLCe first trigger the activation of photoprotection, which is later down-regulated by KEA3 to a low steady state, while adjusting electron transport. Together with the chloroplast NADH dehydrogenase-like (NDH) complex, maximizes photosynthesis efficiency after a long dark adaptation. Required in roots for rapid hyperosmotic-induced Ca(2+) responses and for osmo-sensory potentiation in hyperosmotic conditions. In terms of biological role, low K(+)/H(+) efflux antiporter activity. Functionally, low K(+)/H(+) efflux antiporter activity. Promotes non-photochemical quenching (NPQ) in high light conditions. The chain is K(+) efflux antiporter 3, chloroplastic from Arabidopsis thaliana (Mouse-ear cress).